The primary structure comprises 427 residues: MNFDVVIIGGGLAGLTCGVALQEQGKRCVIINNGQAAIDFSSGSMDLLSRLPSGEFVADFYKSYATFAKQLPQHPYSLLGKEKVLAKATQFEQLATSLKLDLVGSTAQNHLRVTPLGGLRGAWLSPNSVPTVKGSEPFPHKTIAILGIEGYHDFQPQLLADNLKQNPQFTHCELSTGYLNIPELDQLRNNAREFRSVNIAQVLEHKLAFRDLVAEIKTATKGAEAIFLPACFGLDDQSFFNQLQQAVEATIFELPTLPPSLLGIRQHKQLRHRFERLGGLMLNGDRALKADIENGKVQRIYTQLHQDNAISAEHLVLATGSYFSNGLKADFDRIFEPVFQADIVGCKDFNETDRLSWTANRFSSPQPYQSAGVAINEKCQVRKDGQFMANLYATGNVIGGFNSLELGCGSGVAVVTALAVAEEIVGA.

This sequence belongs to the anaerobic G-3-P dehydrogenase subunit B family. Composed of a catalytic GlpA/B dimer and of membrane bound GlpC. The cofactor is FMN.

It catalyses the reaction a quinone + sn-glycerol 3-phosphate = dihydroxyacetone phosphate + a quinol. It functions in the pathway polyol metabolism; glycerol degradation via glycerol kinase pathway; glycerone phosphate from sn-glycerol 3-phosphate (anaerobic route): step 1/1. Its function is as follows. Conversion of glycerol 3-phosphate to dihydroxyacetone. Uses fumarate or nitrate as electron acceptor. The protein is Anaerobic glycerol-3-phosphate dehydrogenase subunit B of Glaesserella parasuis serovar 5 (strain SH0165) (Haemophilus parasuis).